The primary structure comprises 62 residues: Photosystem II reaction center protein Z (62 aa).

A run of 2 helical transmembrane segments spans residues 8–28 (ALVA…VAYA) and 41–61 (WLGS…NFFV).

This sequence belongs to the PsbZ family. PSII is composed of 1 copy each of membrane proteins PsbA, PsbB, PsbC, PsbD, PsbE, PsbF, PsbH, PsbI, PsbJ, PsbK, PsbL, PsbM, PsbT, PsbX, PsbY, PsbZ, Psb30/Ycf12, peripheral proteins PsbO, CyanoQ (PsbQ), PsbU, PsbV and a large number of cofactors. It forms dimeric complexes.

The protein resides in the cellular thylakoid membrane. Functionally, may control the interaction of photosystem II (PSII) cores with the light-harvesting antenna, regulates electron flow through the 2 photosystem reaction centers. PSII is a light-driven water plastoquinone oxidoreductase, using light energy to abstract electrons from H(2)O, generating a proton gradient subsequently used for ATP formation. This is Photosystem II reaction center protein Z from Nostoc sp. (strain PCC 7120 / SAG 25.82 / UTEX 2576).